We begin with the raw amino-acid sequence, 410 residues long: MIDMLVLRLPFIDSLVCSRLSGNDLIAFVDLSKIATLSGMNLSARTVEYHIDGDLTVSGLSHPFESLPTHYSGIAFKIYEGSKNFYPCVEIKASPAKVLQGHNVFGTTDLALCSEALLLNFANSLPCLYDLLDVNATTISRIDATFSARAPNENIAKQVIDHLRNVSNGQTKSTRSQNWESTVTWNETSRHRTLVAYLKHVELQHQIQQLSSKPSAKMTSYQKEQLKVLSNPDLLEFASGLVRFEARIETRYLKSFGLPLNLFDAIRFASDYNSQGKDLIFDLWSFSFSELFKAFEGDSMNIYDDSAVLDAIQSKHFTITPSGKTSFAKASRYFGFYRRLVNEGYDSVALTMPRNSFWRYVSALVECGIPKSQLMNLSTCNNVVPLVRFINVDFSSQRPDWYNEPVLKIA.

M1 carries the post-translational modification N-formylmethionine.

It belongs to the inovirus G2P protein family.

The catalysed reaction is ATP + (deoxyribonucleotide)n-3'-hydroxyl + 5'-phospho-(deoxyribonucleotide)m = (deoxyribonucleotide)n+m + AMP + diphosphate.. Isoform G2P plays an essential role in viral DNA replication. Binds the origin of replication and cleaves the dsDNA replicative form I (RFI) and becomes covalently bound to it via phosphotyrosine bond, generating the dsDNA replicative form II (RFII). In turn, viral DNA replication initiates at the 3'-OH of the cleavage site. After one round of rolling circle synthesis, protein G2P is linked to the newly synthesized ssDNA and joins the ends of the displaced strand to generate a circular single-stranded molecule ready to be packed into a virion. Functionally, isoform G10P protein binds to double-stranded DNA and prevents hydrolysis by nucleases. Additionally, G10P is an inhibitor of DNA replication and may have a role in the transition from semiconservative replicative form DNA replication to single-stranded DNA synthesis in the life cycle. This Enterobacteria phage f1 (Bacteriophage f1) protein is Replication-associated protein G2P (II).